Here is a 204-residue protein sequence, read N- to C-terminus: NAD(P)H-quinone oxidoreductase subunit M, chloroplastic (204 aa).

The N-terminal 27 residues, 1–27, are a transit peptide targeting the chloroplast; the sequence is MASTSMSLTRACKVHAVLACSIPSVSS.

It belongs to the NDH complex subunit M family. Part of the chloroplast NDH complex, composed of a mixture of chloroplast and nucleus encoded subunits. Component of the NDH subcomplex A, at least composed of ndhH, ndhI, ndhJ, ndhK, ndhL, ndhM, ndhN and ndhO.

The protein resides in the plastid. Its subcellular location is the chloroplast thylakoid membrane. The catalysed reaction is a plastoquinone + NADH + (n+1) H(+)(in) = a plastoquinol + NAD(+) + n H(+)(out). The enzyme catalyses a plastoquinone + NADPH + (n+1) H(+)(in) = a plastoquinol + NADP(+) + n H(+)(out). Its function is as follows. NDH shuttles electrons from NAD(P)H:plastoquinone, via FMN and iron-sulfur (Fe-S) centers, to quinones in the photosynthetic chain and possibly in a chloroplast respiratory chain. The immediate electron acceptor for the enzyme in this species is believed to be plastoquinone. Couples the redox reaction to proton translocation, and thus conserves the redox energy in a proton gradient. In Physcomitrium patens (Spreading-leaved earth moss), this protein is NAD(P)H-quinone oxidoreductase subunit M, chloroplastic.